The following is a 338-amino-acid chain: Ketol-acid reductoisomerase (NADP(+)) (338 aa).

Residues 1–181 (MHVYYDKDCD…GGGRTGIIET (181 aa)) form the KARI N-terminal Rossmann domain. NADP(+) is bound by residues 24–27 (YGSQ), Arg47, Ser50, Thr52, and 82–85 (DEFQ). His107 is a catalytic residue. Gly133 is a binding site for NADP(+). A KARI C-terminal knotted domain is found at 182 to 327 (TFKDETETDL…AKLRAMMPWI (146 aa)). 4 residues coordinate Mg(2+): Asp190, Glu194, Glu226, and Glu230. Ser251 provides a ligand contact to substrate.

It belongs to the ketol-acid reductoisomerase family. Mg(2+) is required as a cofactor.

It catalyses the reaction (2R)-2,3-dihydroxy-3-methylbutanoate + NADP(+) = (2S)-2-acetolactate + NADPH + H(+). It carries out the reaction (2R,3R)-2,3-dihydroxy-3-methylpentanoate + NADP(+) = (S)-2-ethyl-2-hydroxy-3-oxobutanoate + NADPH + H(+). It participates in amino-acid biosynthesis; L-isoleucine biosynthesis; L-isoleucine from 2-oxobutanoate: step 2/4. The protein operates within amino-acid biosynthesis; L-valine biosynthesis; L-valine from pyruvate: step 2/4. Involved in the biosynthesis of branched-chain amino acids (BCAA). Catalyzes an alkyl-migration followed by a ketol-acid reduction of (S)-2-acetolactate (S2AL) to yield (R)-2,3-dihydroxy-isovalerate. In the isomerase reaction, S2AL is rearranged via a Mg-dependent methyl migration to produce 3-hydroxy-3-methyl-2-ketobutyrate (HMKB). In the reductase reaction, this 2-ketoacid undergoes a metal-dependent reduction by NADPH to yield (R)-2,3-dihydroxy-isovalerate. In Cellvibrio japonicus (strain Ueda107) (Pseudomonas fluorescens subsp. cellulosa), this protein is Ketol-acid reductoisomerase (NADP(+)).